Reading from the N-terminus, the 153-residue chain is Endoribonuclease YbeY (153 aa).

Positions 116, 120, and 126 each coordinate Zn(2+).

Belongs to the endoribonuclease YbeY family. Zn(2+) is required as a cofactor.

It localises to the cytoplasm. Single strand-specific metallo-endoribonuclease involved in late-stage 70S ribosome quality control and in maturation of the 3' terminus of the 16S rRNA. The protein is Endoribonuclease YbeY of Paraburkholderia phytofirmans (strain DSM 17436 / LMG 22146 / PsJN) (Burkholderia phytofirmans).